Here is a 742-residue protein sequence, read N- to C-terminus: Synaptic vesicle glycoprotein 2A (742 aa).

An interaction with SYT1 region spans residues 1–57 (MEEGFRDRAAFIRGAKDIAKEVKKHAAKKVVKGLDRVQDEYSRRSYSRFEEEDDDDD). Topologically, residues 1–169 (MEEGFRDRAA…GHGRFQWTLY (169 aa)) are cytoplasmic. The segment covering 33–49 (GLDRVQDEYSRRSYSRF) has biased composition (basic and acidic residues). Residues 33 to 144 (GLDRVQDEYS…GRGEAQRRKE (112 aa)) form a disordered region. Residues Ser-80 and Ser-81 each carry the phosphoserine modification. Thr-84 bears the Phosphothreonine mark. Over residues 122-137 (VRGGLSDGEGPPGGRG) the composition is skewed to gly residues. Ser-127 bears the Phosphoserine mark. The chain crosses the membrane as a helical span at residues 170–190 (FVLGLALMADGVEVFVVGFVL). Over 191-205 (PSAEKDMCLSDSNKG) the chain is Extracellular. A helical transmembrane segment spans residues 206–226 (MLGLIVYLGMMVGAFLWGGLA). Residues 227–233 (DRLGRRQ) are Cytoplasmic-facing. The chain crosses the membrane as a helical span at residues 234–254 (CLLISLSVNSVFAFFSSFVQG). At 255–262 (YGTFLFCR) the chain is on the extracellular side. A helical membrane pass occupies residues 263–283 (LLSGVGIGGSIPIVFSYFSEF). Residues 284–294 (LAQEKRGEHLS) are Cytoplasmic-facing. Residues 295 to 315 (WLCMFWMIGGVYAAAMAWAII) traverse the membrane as a helical segment. Over 316–334 (PHYGWSFQMGSAYQFHSWR) the chain is Extracellular. A helical transmembrane segment spans residues 335–355 (VFVLVCAFPSVFAIGALTTQP). The Cytoplasmic segment spans residues 356–447 (ESPRFFLENG…CFGPEYRRIT (92 aa)). The residue at position 393 (Ser-393) is a Phosphoserine. A helical transmembrane segment spans residues 448-468 (LMMMGVWFTMSFSYYGLTVWF). At 469–598 (PDMIRHLQAV…GTGEGAYMVY (130 aa)) the chain is on the extracellular side. Tyr-480 carries the phosphotyrosine modification. Residues Asn-498, Asn-548, and Asn-573 are each glycosylated (N-linked (GlcNAc...) asparagine). A helical transmembrane segment spans residues 599–619 (FVSFLGTLAVLPGNIVSALLM). At 620-626 (DKIGRLR) the chain is on the cytoplasmic side. A helical membrane pass occupies residues 627–647 (MLAGSSVMSCVSCFFLSFGNS). Residues 648 to 651 (ESAM) are Extracellular-facing. A helical membrane pass occupies residues 652–672 (IALLCLFGGVSIASWNALDVL). The Cytoplasmic portion of the chain corresponds to 673–690 (TVGLYPSDKRTTAFGFLN). A helical membrane pass occupies residues 691–711 (ALCKLAAVLGISIFTSFVGIT). Lys-712 is a topological domain (extracellular). The chain crosses the membrane as a helical span at residues 713–733 (AAPIPFASAALALGSSLALKL). Topologically, residues 734–742 (PETRGQVLQ) are cytoplasmic.

The protein belongs to the major facilitator superfamily. In terms of assembly, interacts with SYT1/synaptotagmin-1 in a calcium-dependent manner. Binds the adapter protein complex AP-2. In terms of processing, phosphorylation by CK1 of the N-terminal cytoplasmic domain regulates interaction with SYT1. N-glycosylated.

The protein resides in the presynapse. It localises to the cytoplasmic vesicle. It is found in the secretory vesicle. The protein localises to the synaptic vesicle membrane. Its function is as follows. Plays a role in the control of regulated secretion in neural and endocrine cells, enhancing selectively low-frequency neurotransmission. Positively regulates vesicle fusion by maintaining the readily releasable pool of secretory vesicles. The polypeptide is Synaptic vesicle glycoprotein 2A (SV2A) (Macaca fascicularis (Crab-eating macaque)).